An 82-amino-acid chain; its full sequence is Polyferredoxin protein FwdG (82 aa).

4Fe-4S ferredoxin-type domains follow at residues 4-33 and 51-80; these read YELV…PETW and VVTV…LVFK. [4Fe-4S] cluster is bound by residues Cys-13, Cys-16, Cys-19, Cys-23, Cys-60, Cys-63, Cys-66, and Cys-70.

Requires [4Fe-4S] cluster as cofactor.

The chain is Polyferredoxin protein FwdG (fwdG) from Methanocaldococcus jannaschii (strain ATCC 43067 / DSM 2661 / JAL-1 / JCM 10045 / NBRC 100440) (Methanococcus jannaschii).